A 568-amino-acid chain; its full sequence is PTS system lactose-specific EIICB component (568 aa).

Positions 7–409 (LIEKGKPFFE…VVDTIIYYPF (403 aa)) constitute a PTS EIIC type-3 domain. The next 9 membrane-spanning stretches (helical) occupy residues 30–50 (GFIAGMPVILFSSIFILIAYV), 62–82 (IETFLMTPYSYSMGILAFFVG), 103–123 (INFLSTMLASMVGFLLMAAEP), 128–148 (GFLTAFMGTKGLLTAFIAAFV), 183–203 (FTVSVVLLYGLELLVKGTLGV), 222–242 (GYLGITLIFGAYAFFWFVGIH), 283–303 (FIATMGGTGATLIVPFLFMWI), 339–359 (IFFVPFIFAPIVNVWIFKFFV), and 389–409 (VLSFILAGLLVVVDTIIYYPF). Positions 466-568 (ETNVLVLCAG…ALAFVQQQFD (103 aa)) constitute a PTS EIIB type-3 domain. The active-site Phosphocysteine intermediate; for EIIB activity is C473. C473 carries the post-translational modification Phosphocysteine; by EIIA.

It localises to the cell membrane. It carries out the reaction lactose(out) + N(pros)-phospho-L-histidyl-[protein] = lactose 6-phosphate(in) + L-histidyl-[protein]. In terms of biological role, the phosphoenolpyruvate-dependent sugar phosphotransferase system (sugar PTS), a major carbohydrate active transport system, catalyzes the phosphorylation of incoming sugar substrates concomitantly with their translocation across the cell membrane. The enzyme II LacEF PTS system is involved in lactose transport. This Lactococcus lactis subsp. lactis (Streptococcus lactis) protein is PTS system lactose-specific EIICB component.